A 261-amino-acid chain; its full sequence is Ethanolamine ammonia-lyase small subunit (261 aa).

The adenosylcob(III)alamin site is built by V158, E179, and C208.

This sequence belongs to the EutC family. In terms of assembly, the basic unit is a heterodimer which dimerizes to form tetramers. The heterotetramers trimerize; 6 large subunits form a core ring with 6 small subunits projecting outwards. Adenosylcob(III)alamin is required as a cofactor.

The protein resides in the bacterial microcompartment. The enzyme catalyses ethanolamine = acetaldehyde + NH4(+). It functions in the pathway amine and polyamine degradation; ethanolamine degradation. Functionally, catalyzes the deamination of various vicinal amino-alcohols to oxo compounds. Allows this organism to utilize ethanolamine as the sole source of nitrogen and carbon in the presence of external vitamin B12. The polypeptide is Ethanolamine ammonia-lyase small subunit (Bradyrhizobium diazoefficiens (strain JCM 10833 / BCRC 13528 / IAM 13628 / NBRC 14792 / USDA 110)).